We begin with the raw amino-acid sequence, 345 residues long: Anthranilate phosphoribosyltransferase (345 aa).

5-phospho-alpha-D-ribose 1-diphosphate-binding positions include 77-79 (TAG), 82-83 (GD), T87, 89-92 (NVST), 106-114 (KHGNRAVSG), and S118. Position 79 (G79) interacts with anthranilate. S91 is a binding site for Mg(2+). N109 lines the anthranilate pocket. R164 is a binding site for anthranilate. 2 residues coordinate Mg(2+): D223 and E224.

Belongs to the anthranilate phosphoribosyltransferase family. As to quaternary structure, homodimer. The cofactor is Mg(2+).

The catalysed reaction is N-(5-phospho-beta-D-ribosyl)anthranilate + diphosphate = 5-phospho-alpha-D-ribose 1-diphosphate + anthranilate. The protein operates within amino-acid biosynthesis; L-tryptophan biosynthesis; L-tryptophan from chorismate: step 2/5. Catalyzes the transfer of the phosphoribosyl group of 5-phosphorylribose-1-pyrophosphate (PRPP) to anthranilate to yield N-(5'-phosphoribosyl)-anthranilate (PRA). The polypeptide is Anthranilate phosphoribosyltransferase (Saccharolobus solfataricus (strain ATCC 35092 / DSM 1617 / JCM 11322 / P2) (Sulfolobus solfataricus)).